The sequence spans 134 residues: Large ribosomal subunit protein uL18 (134 aa).

The protein belongs to the universal ribosomal protein uL18 family. As to quaternary structure, part of the 50S ribosomal subunit; part of the 5S rRNA/L5/L18/L25 subcomplex. Contacts the 5S and 23S rRNAs.

In terms of biological role, this is one of the proteins that bind and probably mediate the attachment of the 5S RNA into the large ribosomal subunit, where it forms part of the central protuberance. In Corynebacterium efficiens (strain DSM 44549 / YS-314 / AJ 12310 / JCM 11189 / NBRC 100395), this protein is Large ribosomal subunit protein uL18.